The following is a 337-amino-acid chain: Formamidase (337 aa).

A CN hydrolase domain is found at 14–257 (VVIGLVQLQL…DEIITAEVRP (244 aa)). Glu60 functions as the Proton acceptor in the catalytic mechanism. Residue Lys129 is the Proton donor of the active site. The Nucleophile role is filled by Cys162.

It belongs to the carbon-nitrogen hydrolase superfamily. Aliphatic amidase family.

It catalyses the reaction formamide + H2O = formate + NH4(+). Is an aliphatic amidase with a restricted substrate specificity, as it only hydrolyzes formamide. The polypeptide is Formamidase (Bradyrhizobium diazoefficiens (strain JCM 10833 / BCRC 13528 / IAM 13628 / NBRC 14792 / USDA 110)).